We begin with the raw amino-acid sequence, 308 residues long: Glycine--tRNA ligase alpha subunit (308 aa).

Belongs to the class-II aminoacyl-tRNA synthetase family. As to quaternary structure, tetramer of two alpha and two beta subunits.

It is found in the cytoplasm. It carries out the reaction tRNA(Gly) + glycine + ATP = glycyl-tRNA(Gly) + AMP + diphosphate. In Polaromonas naphthalenivorans (strain CJ2), this protein is Glycine--tRNA ligase alpha subunit.